We begin with the raw amino-acid sequence, 165 residues long: Adenine phosphoribosyltransferase (165 aa).

Belongs to the purine/pyrimidine phosphoribosyltransferase family. In terms of assembly, homodimer.

It is found in the cytoplasm. It catalyses the reaction AMP + diphosphate = 5-phospho-alpha-D-ribose 1-diphosphate + adenine. It participates in purine metabolism; AMP biosynthesis via salvage pathway; AMP from adenine: step 1/1. Its function is as follows. Catalyzes a salvage reaction resulting in the formation of AMP, that is energically less costly than de novo synthesis. The chain is Adenine phosphoribosyltransferase from Bdellovibrio bacteriovorus (strain ATCC 15356 / DSM 50701 / NCIMB 9529 / HD100).